The following is a 28-amino-acid chain: Antibacterial protein LC3 (28 aa).

Its function is as follows. Antibacterial activity against X.campestris, especially strain G, and P.solacearum PO1. This is Antibacterial protein LC3 from Bacillus subtilis.